The chain runs to 170 residues: ATP synthase subunit b (170 aa).

Residues 3-23 traverse the membrane as a helical segment; sequence IKILFFLALPFLAYASEHGGT.

It belongs to the ATPase B chain family. In terms of assembly, F-type ATPases have 2 components, F(1) - the catalytic core - and F(0) - the membrane proton channel. F(1) has five subunits: alpha(3), beta(3), gamma(1), delta(1), epsilon(1). F(0) has three main subunits: a(1), b(2) and c(10-14). The alpha and beta chains form an alternating ring which encloses part of the gamma chain. F(1) is attached to F(0) by a central stalk formed by the gamma and epsilon chains, while a peripheral stalk is formed by the delta and b chains.

It is found in the cell inner membrane. Functionally, f(1)F(0) ATP synthase produces ATP from ADP in the presence of a proton or sodium gradient. F-type ATPases consist of two structural domains, F(1) containing the extramembraneous catalytic core and F(0) containing the membrane proton channel, linked together by a central stalk and a peripheral stalk. During catalysis, ATP synthesis in the catalytic domain of F(1) is coupled via a rotary mechanism of the central stalk subunits to proton translocation. Component of the F(0) channel, it forms part of the peripheral stalk, linking F(1) to F(0). In Campylobacter concisus (strain 13826), this protein is ATP synthase subunit b.